Here is a 323-residue protein sequence, read N- to C-terminus: tRNA U34 carboxymethyltransferase (323 aa).

Carboxy-S-adenosyl-L-methionine-binding positions include Lys91, Trp105, Lys110, Gly130, 152 to 154, 181 to 182, Met196, Tyr200, and Arg315; these read DPS and IE.

The protein belongs to the class I-like SAM-binding methyltransferase superfamily. CmoB family. In terms of assembly, homotetramer.

The catalysed reaction is carboxy-S-adenosyl-L-methionine + 5-hydroxyuridine(34) in tRNA = 5-carboxymethoxyuridine(34) in tRNA + S-adenosyl-L-homocysteine + H(+). In terms of biological role, catalyzes carboxymethyl transfer from carboxy-S-adenosyl-L-methionine (Cx-SAM) to 5-hydroxyuridine (ho5U) to form 5-carboxymethoxyuridine (cmo5U) at position 34 in tRNAs. This chain is tRNA U34 carboxymethyltransferase, found in Vibrio cholerae serotype O1 (strain ATCC 39541 / Classical Ogawa 395 / O395).